We begin with the raw amino-acid sequence, 706 residues long: Probable serine/threonine-protein kinase zyg-1 (706 aa).

The Protein kinase domain maps to 13 to 249; sequence YSHLKEIGKG…LTQIVLSEFM (237 aa). ATP contacts are provided by residues 19 to 27 and lysine 41; that span reads IGKGGFGVV. Aspartate 131 acts as the Proton acceptor in catalysis. Basic and acidic residues-rich tracts occupy residues 261-290 and 323-336; these read SREH…DGRA and FDSE…RDSG. 2 disordered regions span residues 261–351 and 566–632; these read SREH…NRSQ and SPSS…VAPS. Low complexity predominate over residues 566–579; it reads SPSSLMPSGSSQTS. Polar residues-rich tracts occupy residues 580 to 592 and 603 to 629; these read RFPF…NQPS and KPTS…SPSV.

This sequence belongs to the protein kinase superfamily. Ser/Thr protein kinase family. In terms of assembly, interacts with sel-10. Probably ubiquitinated by the SCF(sel-10) and SCF(lin-23) E3 ubiquitin ligase complexes, leading to its proteasomal degradation.

The protein resides in the cytoplasm. Its subcellular location is the cytoskeleton. The protein localises to the microtubule organizing center. It is found in the centrosome. It localises to the centriole. It carries out the reaction L-seryl-[protein] + ATP = O-phospho-L-seryl-[protein] + ADP + H(+). The enzyme catalyses L-threonyl-[protein] + ATP = O-phospho-L-threonyl-[protein] + ADP + H(+). Protein kinase that plays a central role in centrosome duplication, control of centrosome size, spindle formation and nuclear envelope breakdown during cell divisions. Paternal copy is required to regulate synthesis of daughter centrioles prior to fertilization. Maternal copy regulates centrosome duplication during later cell cycles. Functions upstream of sas-5 and sas-6, and is required for their localization to the centrosome. Its role in nuclear envelope breakdown is mediated by the spindly-like protein spdl-1 and the RZZ complex, which in turn recruits the spindle checkpoint proteins mdf-1 and mdf-2, dynein and dynactin to unattached kinetochores. This is Probable serine/threonine-protein kinase zyg-1 from Caenorhabditis elegans.